We begin with the raw amino-acid sequence, 103 residues long: MVTQFKTASEFDSAIAQDKLVVVDFYATWCGPCKMIAPMIEKFSEQYPQADFYKLDVDELGDVAQKNEVSAMPTLLLFKNGKEVAKVVGANPAAIKQAIAANA.

Positions 2–103 (VTQFKTASEF…AIKQAIAANA (102 aa)) constitute a Thioredoxin domain. Catalysis depends on nucleophile residues Cys30 and Cys33. Cysteines 30 and 33 form a disulfide. Glycyl lysine isopeptide (Lys-Gly) (interchain with G-Cter in ubiquitin) cross-links involve residues Lys54, Lys66, and Lys96.

This sequence belongs to the thioredoxin family. Monomer. Part of the heterodimeric LMA1 complex together with the proteinase inhibitor PBI2. Most of the thioredoxin of yeast is in this complex rather than the well-studied monomer. LMA1 binds to the ATPase SEC18. In terms of processing, reversible disulfide bond formation between Cys-30 and Cys-33, reverted by thioredoxin reductase TRR1 using NADPH as hydrogen donor.

It is found in the nucleus. The protein localises to the cytoplasm. Its subcellular location is the golgi apparatus membrane. It localises to the mitochondrion intermembrane space. Its function is as follows. Participates as a hydrogen donor in redox reactions through the reversible oxidation of its active center dithiol to a disulfide, accompanied by the transfer of 2 electrons and 2 protons. It is involved in many cellular processes, including deoxyribonucleotide synthesis, repair of oxidatively damaged proteins, protein folding, sulfur metabolism, and redox homeostasis. Thioredoxin-dependent enzymes include phosphoadenosine-phosphosulfate reductase MET16, alkyl-hydroperoxide reductase DOT5, thioredoxin peroxidases TSA1 and TSA2, alkyl hydroperoxide reductase AHP1, and peroxiredoxin HYR1. Thioredoxin is also involved in protection against reducing stress. As part of the LMA1 complex, it is involved in the facilitation of vesicle fusion such as homotypic vacuole and ER-derived COPII vesicle fusion with the Golgi. This activity does not require the redox mechanism. In Saccharomyces cerevisiae (strain ATCC 204508 / S288c) (Baker's yeast), this protein is Thioredoxin-1 (TRX1).